The following is a 263-amino-acid chain: Aquaporin Lacbi1:247946 (263 aa).

Over 1–18 (MKLTISHHKCAIRKVMAE) the chain is Cytoplasmic. The chain crosses the membrane as a helical span at residues 19–39 (FVGVALLVIFGAGTACQVVLS). The Extracellular segment spans residues 40–45 (TNPSSF). Residues 46 to 66 (LSINFGWAIGIATGAWVSAGI) form a helical membrane-spanning segment. Over 67–89 (SGGHINPAITIAMATYRGFPWRE) the chain is Cytoplasmic. The NPA 1 motif lies at 72-74 (NPA). A helical transmembrane segment spans residues 90-110 (VPGYIFAQALGGFVGAALVYA). Over 111-143 (NYFHAIDIFEGGHIRTQATASLFATFALPYMTQ) the chain is Extracellular. A helical transmembrane segment spans residues 144–164 (ASCFFSEFLATAVLFIVFLAL). The Cytoplasmic portion of the chain corresponds to 165 to 169 (NDKHN). Residues 170 to 190 (GALTNGLLPFALFILFIGLGA) traverse the membrane as a helical segment. At 191–227 (SLGMQTGYAVNPARDFGPRLFLAMAGYGKAVFNYRRQ) the chain is on the extracellular side. The short motif at 201–203 (NPA) is the NPA 2 element. A helical transmembrane segment spans residues 228-248 (YWIWAPIIAPILGAQAGGLLY). At 249 to 263 (DTSIYNGDDSPIKWR) the chain is on the cytoplasmic side.

The protein belongs to the MIP/aquaporin (TC 1.A.8) family.

It localises to the membrane. The catalysed reaction is H2O(in) = H2O(out). Water channel required to facilitate the transport of water across membranes. Shows low but significant water conductivity, but no glycerol nor ammonium transport activities. This chain is Aquaporin Lacbi1:247946, found in Laccaria bicolor (strain S238N-H82 / ATCC MYA-4686) (Bicoloured deceiver).